A 66-amino-acid polypeptide reads, in one-letter code: Putative alpha-neurotoxin RjAa13 (66 aa).

The 60-residue stretch at Lys-1–Arg-60 folds into the LCN-type CS-alpha/beta domain. Cystine bridges form between Cys-11/Cys-59, Cys-15/Cys-35, Cys-21/Cys-42, and Cys-25/Cys-44.

This sequence belongs to the long (4 C-C) scorpion toxin superfamily. Sodium channel inhibitor family. Alpha subfamily. In terms of tissue distribution, expressed by the venom gland.

The protein resides in the secreted. Alpha toxins bind voltage-independently at site-3 of sodium channels (Nav) and inhibits the inactivation of the activated channels, thereby blocking neuronal transmission. This Rhopalurus junceus (Caribbean blue scorpion) protein is Putative alpha-neurotoxin RjAa13.